The sequence spans 1289 residues: Outer capsid protein lambda-2 (1289 aa).

893–900 (GAAAAGKS) is a binding site for ATP.

Belongs to the orthoreovirus lambda-2 protein family. As to quaternary structure, interacts with protein mu-NS; in viral inclusions.

It localises to the virion. It carries out the reaction a 5'-end diphospho-ribonucleoside in mRNA + GTP + H(+) = a 5'-end (5'-triphosphoguanosine)-ribonucleoside in mRNA + diphosphate. The catalysed reaction is a 5'-end (5'-triphosphoguanosine)-ribonucleoside in mRNA + S-adenosyl-L-methionine = a 5'-end (N(7)-methyl 5'-triphosphoguanosine)-ribonucleoside in mRNA + S-adenosyl-L-homocysteine. Outer capsid protein involved in mRNA capping. Catalyzes the last 3 enzymatic activities for formation of the 5' cap structure on the viral plus-strand transcripts, namely the RNA guanylyltransferase, RNA-7N- and RNA-2'O-methyltransferase activities. This Reovirus type 1 (strain Lang) (T1L) protein is Outer capsid protein lambda-2 (L2).